Here is a 586-residue protein sequence, read N- to C-terminus: MKQSVSAEQIELKSSLPGSKKVYVDGPREGMKVPMREIEQSETNGVPNPPIRVYDTSGPYTDPAYKVELEKGIPTPRHSWIMGRGDVDAYEGREVKPEDDGVKVASKHTPVFPQMDRKPLRAKQGANVTQMHYARNGIITSEMEYVAIREGVEPEFVRKEIAEGRAILPANINHPEAEPMIIGRNFHVKVNANIGNSAVSSSIAEEVEKMTWATRWGADTIMDLSTGKNIHTTREWIIRNAPVPVGTVPIYQALEKVNGIAEDLTWEVYRDTLIEQAEQGVDYFTIHAGVLLRYIPITAKRTTGIVSRGGSIMAQWCLFHHKENFLYTHFEEICEIMKQYDVSFSLGDGLRPGSIADANDEAQFSELETLGELTKIAWKHDVQVMIEGPGHVPMHLIKENMEKELDICQGAPFYTLGPLTTDIAPGYDHITSAIGAAMIGWFGTAMLCYVTPKEHLGLPNKDDVRTGVITYKIAAHAADLAKGHKTAHQRDDALSKARFEFRWRDQFNLSLDPERAMEYHDETLPAEGAKTAHFCSMCGPKFCSMRISHDIREYAKENDLETTEAIEKGMKEKAEEFKEAGSHLYQ.

The interval 1–33 is disordered; that stretch reads MKQSVSAEQIELKSSLPGSKKVYVDGPREGMKV. The span at 22 to 33 shows a compositional bias: basic and acidic residues; that stretch reads VYVDGPREGMKV. Substrate-binding positions include N193, M222, Y251, H287, 307 to 309, 348 to 351, and E387; these read SRG and DGLR. Zn(2+) is bound at residue H391. Substrate is bound at residue Y414. H455 provides a ligand contact to Zn(2+). Residues C535, C538, and C543 each contribute to the [4Fe-4S] cluster site.

It belongs to the ThiC family. [4Fe-4S] cluster is required as a cofactor.

The catalysed reaction is 5-amino-1-(5-phospho-beta-D-ribosyl)imidazole + S-adenosyl-L-methionine = 4-amino-2-methyl-5-(phosphooxymethyl)pyrimidine + CO + 5'-deoxyadenosine + formate + L-methionine + 3 H(+). The protein operates within cofactor biosynthesis; thiamine diphosphate biosynthesis. Functionally, catalyzes the synthesis of the hydroxymethylpyrimidine phosphate (HMP-P) moiety of thiamine from aminoimidazole ribotide (AIR) in a radical S-adenosyl-L-methionine (SAM)-dependent reaction. This Bacillus cereus (strain G9842) protein is Phosphomethylpyrimidine synthase.